Here is a 487-residue protein sequence, read N- to C-terminus: Glutamate--tRNA ligase (487 aa).

The 'HIGH' region motif lies at 11-21 (PSPTGYPHLGN). Positions 108, 110, 135, and 137 each coordinate Zn(2+). Residues 245–249 (KLSKR) carry the 'KMSKS' region motif. Lys248 lines the ATP pocket.

It belongs to the class-I aminoacyl-tRNA synthetase family. Glutamate--tRNA ligase type 1 subfamily. As to quaternary structure, monomer. Zn(2+) is required as a cofactor.

The protein localises to the cytoplasm. It carries out the reaction tRNA(Glu) + L-glutamate + ATP = L-glutamyl-tRNA(Glu) + AMP + diphosphate. Its function is as follows. Catalyzes the attachment of glutamate to tRNA(Glu) in a two-step reaction: glutamate is first activated by ATP to form Glu-AMP and then transferred to the acceptor end of tRNA(Glu). This is Glutamate--tRNA ligase from Dehalococcoides mccartyi (strain ATCC BAA-2100 / JCM 16839 / KCTC 5957 / BAV1).